A 471-amino-acid polypeptide reads, in one-letter code: E3 ubiquitin-protein ligase TRIM38 (471 aa).

Residues 16–62 (CSICKAMMSHPVSINCGHSYCKSCIQSYYCNVSPKTGWKMLGCPLCS) form an RING-type zinc finger. Residues 90–131 (DQDMVCEEHEEKFNRFCEDDGQLLCWRCYWEDRHKGHTLAHV) form a B box-type zinc finger. Zn(2+) contacts are provided by Cys-95, His-98, Cys-117, and His-123. The B30.2/SPRY domain maps to 276–471 (CNVSELYFDV…PLFLPAINNQ (196 aa)).

As to quaternary structure, interacts (via B30.2/SPRY domain) with TAB2 and TAB3.

The protein localises to the cytoplasm. It catalyses the reaction S-ubiquitinyl-[E2 ubiquitin-conjugating enzyme]-L-cysteine + [acceptor protein]-L-lysine = [E2 ubiquitin-conjugating enzyme]-L-cysteine + N(6)-ubiquitinyl-[acceptor protein]-L-lysine.. Its pathway is protein modification; protein ubiquitination. The protein operates within protein modification; protein sumoylation. E3 ubiquitin-protein and E3 SUMO-protein ligase that acts as a regulator of innate immunity. Acts as a negative regulator of type I interferon IFN-beta production by catalyzing 'Lys-48'-linked polyubiquitination of AZI2/NAP1, leading to its degradation. Mediates 'Lys-48'-linked polyubiquitination and proteasomal degradation of the critical TLR adapter TICAM1, inhibiting TLR3-mediated type I interferon signaling. Acts as a positive regulator of the cGAS-STING pathway by acting as a E3 SUMO-protein ligase: mediates sumoylation of CGAS and STING, preventing their degradation and thereby activating the innate immune response to DNA virus. Also acts as a negative regulator of NF-kappa-B signaling independently of its E3 protein ligase activity by promoting lysosome-dependent degradation of TAB2 and TAB3 adapters. The sequence is that of E3 ubiquitin-protein ligase TRIM38 from Mus musculus (Mouse).